The sequence spans 219 residues: Small ribosomal subunit protein uS3c (219 aa).

Residues 47-118 (IKKNIRISSG…KINIAITRIT (72 aa)) form the KH type-2 domain.

It belongs to the universal ribosomal protein uS3 family. In terms of assembly, part of the 30S ribosomal subunit.

Its subcellular location is the plastid. It localises to the chloroplast. This Citrus sinensis (Sweet orange) protein is Small ribosomal subunit protein uS3c (rps3).